The primary structure comprises 323 residues: 4-hydroxyphenylpyruvate 3-dimethylallyltransferase (323 aa).

The substrate site is built by arginine 160 and glutamate 281.

Belongs to the aromatic prenyltransferase family. Monomer.

It is found in the cytoplasm. The enzyme catalyses 3-(4-hydroxyphenyl)pyruvate + dimethylallyl diphosphate = 3-dimethylallyl-4-hydroxyphenylpyruvate + diphosphate. It participates in antibiotic biosynthesis; novobiocin biosynthesis. Its function is as follows. Magnesium-independent aromatic prenyltransferase that catalyzes the irreversible transfer of a dimethylallyl group to 4-hydroxyphenylpyruvate to produce the ring A structure in the novobiocin biosynthesis pathway. Novobiocin is an aminocoumarin family antibiotic that targets bacterial DNA gyrases. It is able to prenylate many different compounds, including the phenylpropanoids 4-coumarate and caffeate, the plant polyketide resveratrol, the (iso)flavonoid naringenin, apigenin, daidzein and genistein, and the dihydroxynaphthalenes 1,6-DHN and 2,7-DHN. This is 4-hydroxyphenylpyruvate 3-dimethylallyltransferase from Streptomyces niveus (Streptomyces spheroides).